A 207-amino-acid polypeptide reads, in one-letter code: Large ribosomal subunit protein bL25 (207 aa).

The protein belongs to the bacterial ribosomal protein bL25 family. CTC subfamily. Part of the 50S ribosomal subunit; part of the 5S rRNA/L5/L18/L25 subcomplex. Contacts the 5S rRNA. Binds to the 5S rRNA independently of L5 and L18.

In terms of biological role, this is one of the proteins that binds to the 5S RNA in the ribosome where it forms part of the central protuberance. This Azorhizobium caulinodans (strain ATCC 43989 / DSM 5975 / JCM 20966 / LMG 6465 / NBRC 14845 / NCIMB 13405 / ORS 571) protein is Large ribosomal subunit protein bL25.